Here is a 323-residue protein sequence, read N- to C-terminus: Germination protease (323 aa).

A propeptide spanning residues methionine 1–aspartate 6 is cleaved from the precursor.

The protein belongs to the peptidase A25 family. In terms of assembly, homotetramer. Autoproteolytically processed. The inactive tetrameric zymogen termed p46 autoprocesses to a smaller form termed p41, which is active only during spore germination.

The enzyme catalyses Endopeptidase action with P4 Glu or Asp, P1 preferably Glu &gt; Asp, P1' hydrophobic and P2' Ala.. Its function is as follows. Initiates the rapid degradation of small, acid-soluble proteins during spore germination. In Clostridium tetani (strain Massachusetts / E88), this protein is Germination protease.